Here is a 34-residue protein sequence, read N- to C-terminus: Leader peptide SpeFL (34 aa).

Residues 1–13 (MENNSRTMPHIRR) form a sensor domain region. Residues 10-16 (HIRRTTH) carry the Ornithine recognition loop motif. R13 provides a ligand contact to L-ornithine. The segment at 14-34 (TTHIMKFAHRNSFDFHFFNAR) is effector domain.

It belongs to the speF operon leader peptide family. In terms of assembly, binds ornithine in stalled 70S ribosomes, blocking the upper two-thirds of the exit tunnel. Contacts 23S rRNA and ribosomal proteins L4 and L22.

A small protein (arrest peptide) encoded upstream of inducible ornithine carboxylase gene (speF) that controls expression of downstream genes (speF and patE) by nascent chain-translational arrest and transcriptional attenuation. In the presence of ornithine a toeprint due to ribosomal arrest can be seen on the speFL transcript. Only L-ornithine (not other tested amino acids) has this effect. It is thought that in the presence of ornithine, ribosomal stalling on speFL prevents binding of Rho transcription termination factor to a downstream rut site allowing transcription of the operon. In the absence of ornithine, ribosomes terminate translation and are recycled, exposing the rut site allowing Rho to bind and prematurely terminate transcription. The presence of a pair of rare Arg codons could slow down translation to prevent polysome accumulation and to expose the rut site to Rho. This is Leader peptide SpeFL from Escherichia coli (strain K12).